The chain runs to 287 residues: Protoheme IX farnesyltransferase (287 aa).

7 helical membrane-spanning segments follow: residues 19–39, 100–120, 134–154, 162–182, 212–232, 233–253, and 267–287; these read LMVA…VTIT, MVLC…IVAV, FALL…WLAV, MLVV…WLHA, VWFH…LLEG, VGMR…AMLA, and VLCA…VSLF.

Belongs to the UbiA prenyltransferase family. Protoheme IX farnesyltransferase subfamily.

It is found in the cell inner membrane. The enzyme catalyses heme b + (2E,6E)-farnesyl diphosphate + H2O = Fe(II)-heme o + diphosphate. It participates in porphyrin-containing compound metabolism; heme O biosynthesis; heme O from protoheme: step 1/1. Functionally, converts heme B (protoheme IX) to heme O by substitution of the vinyl group on carbon 2 of heme B porphyrin ring with a hydroxyethyl farnesyl side group. The chain is Protoheme IX farnesyltransferase from Nitratidesulfovibrio vulgaris (strain DP4) (Desulfovibrio vulgaris).